Here is a 357-residue protein sequence, read N- to C-terminus: Protein RecA (357 aa).

67-74 (GPESSGKT) lines the ATP pocket. The segment at 335–357 (LSSSASDDENSEGNVDFETGEVF) is disordered.

This sequence belongs to the RecA family.

It is found in the cytoplasm. Its function is as follows. Can catalyze the hydrolysis of ATP in the presence of single-stranded DNA, the ATP-dependent uptake of single-stranded DNA by duplex DNA, and the ATP-dependent hybridization of homologous single-stranded DNAs. It interacts with LexA causing its activation and leading to its autocatalytic cleavage. This is Protein RecA from Shewanella sp. (strain MR-4).